We begin with the raw amino-acid sequence, 82 residues long: Small ribosomal subunit protein bS20 (82 aa).

Belongs to the bacterial ribosomal protein bS20 family.

In terms of biological role, binds directly to 16S ribosomal RNA. This chain is Small ribosomal subunit protein bS20, found in Lysinibacillus sphaericus (strain C3-41).